The primary structure comprises 995 residues: Meckelin (995 aa).

The signal sequence occupies residues 1-36 (MATRGGAGVAMAVWSLLSARAVTAFLLLFLPRFLQA). The tract at residues 37–280 (QTFSFPFQQP…FQFIFENTAG (244 aa)) is cysteine-rich. The Extracellular portion of the chain corresponds to 37–519 (QTFSFPFQQP…SVTYEMDHGE (483 aa)). 11 disulfide bridges follow: C49–C62, C65–C78, C80–C97, C100–C114, C117–C127, C129–C150, C153–C170, C173–C184, C186–C197, C237–C246, and C253–C268. The N-linked (GlcNAc...) asparagine glycan is linked to N141. A glycan (N-linked (GlcNAc...) asparagine) is linked at N179. Residue N242 is glycosylated (N-linked (GlcNAc...) asparagine). N-linked (GlcNAc...) asparagine glycosylation occurs at N318. A disulfide bridge connects residues C357 and C378. Residues 520–548 (AHVQTDIALGVLGGLAVLASLLKTAGWKR) traverse the membrane as a helical segment. The Cytoplasmic portion of the chain corresponds to 549-558 (RIGSPMIDLQ). Residues 559-590 (TVVKFLVYYAGDLANVFFIITVGTGLYWLIFF) form a helical membrane-spanning segment. Over 591 to 603 (KAQKSVSVLLPMP) the chain is Extracellular. The helical transmembrane segment at 604–631 (IQEERFVTYVGCAFALKALQFLHKLISQ) threads the bilayer. Residues 632–670 (ITIDVFFIDWERPKGKVLKAVEGEGGVRSATVPVSIWRT) are Cytoplasmic-facing. The segment at residues 671–679 (YFVANEWNE) is an intramembrane region (helical). Residues 671–701 (YFVANEWNEIQTVRKINSLFQVLTVLFFLEV) traverse the membrane as a discontinuously helical segment. Residues 680–688 (IQTVRKINS) lie within the membrane without spanning it. Residues 689-701 (LFQVLTVLFFLEV) constitute an intramembrane region (helical). At 702–731 (VGFKNLALMDSSSSLSRNPPSYIAPYSCIL) the chain is on the extracellular side. Positions 732–757 (RYAVSAALWLAIGIIQVVFFAVFYER) form an intramembrane region, helical. A discontinuously helical transmembrane segment spans residues 732 to 771 (RYAVSAALWLAIGIIQVVFFAVFYERFIEDKIRQFVDLCS). Residues 758 to 762 (FIEDK) lie within the membrane without spanning it. Positions 763–771 (IRQFVDLCS) form an intramembrane region, helical. Residues 772–926 (MSNISVFLLS…SIFYNDEGYS (155 aa)) are Cytoplasmic-facing. A coiled-coil region spans residues 828-917 (GQTFEIAISN…MEFMEPMEKS (90 aa)). The segment at residues 927–929 (FSS) is an intramembrane region (helical). A discontinuously helical membrane pass occupies residues 927–952 (FSSVLYYGNEATLLIFDLLFFCVVDL). An intramembrane segment occupies 930–936 (VLYYGNE). The segment at residues 937–952 (ATLLIFDLLFFCVVDL) is an intramembrane region (helical). Residues 953–957 (ACQNF) lie on the Extracellular side of the membrane. Residues 958–985 (ILASFLTYLQQEIFRYIRNTVGQKNLAS) traverse the membrane as a helical segment. Over 986-995 (KTLVDQRFLI) the chain is Cytoplasmic.

In terms of assembly, homodimer. Part of the tectonic-like complex (also named B9 complex). Interacts with DNAJB9, DNAJC10 and mutated SFTPC. Interacts with SYNE2 during the early establishment of cell polarity. Interacts (via C-terminus) with FLNA. Interacts with TMEM218. Interacts with WNT5A. Interacts with ROR2. As to expression, widely expressed in adult and fetal tissues. Expressed at higher level in spinal cord.

Its subcellular location is the cell membrane. It localises to the endoplasmic reticulum membrane. The protein resides in the cell projection. It is found in the cilium. The protein localises to the cytoplasm. Its subcellular location is the cytoskeleton. It localises to the cilium basal body. Required for ciliary structure and function. Part of the tectonic-like complex which is required for tissue-specific ciliogenesis and may regulate ciliary membrane composition. Involved in centrosome migration to the apical cell surface during early ciliogenesis. Involved in the regulation of cilia length and appropriate number through the control of centrosome duplication. Is a key regulator of stereociliary bundle orientation. Required for epithelial cell branching morphology. Essential for endoplasmic reticulum-associated degradation (ERAD) of surfactant protein C (SFTPC). Involved in the negative regulation of canonical Wnt signaling, and activation of the non-canonical cascade stimulated by WNT5A. In non-canonical Wnt signaling, it may act as ROR2 coreceptor. This chain is Meckelin (TMEM67), found in Homo sapiens (Human).